Consider the following 241-residue polypeptide: 1-(5-phosphoribosyl)-5-[(5-phosphoribosylamino)methylideneamino] imidazole-4-carboxamide isomerase (241 aa).

The active-site Proton acceptor is the Asp-8. Asp-130 serves as the catalytic Proton donor.

This sequence belongs to the HisA/HisF family.

The protein resides in the cytoplasm. It catalyses the reaction 1-(5-phospho-beta-D-ribosyl)-5-[(5-phospho-beta-D-ribosylamino)methylideneamino]imidazole-4-carboxamide = 5-[(5-phospho-1-deoxy-D-ribulos-1-ylimino)methylamino]-1-(5-phospho-beta-D-ribosyl)imidazole-4-carboxamide. Its pathway is amino-acid biosynthesis; L-histidine biosynthesis; L-histidine from 5-phospho-alpha-D-ribose 1-diphosphate: step 4/9. The sequence is that of 1-(5-phosphoribosyl)-5-[(5-phosphoribosylamino)methylideneamino] imidazole-4-carboxamide isomerase from Leptospira interrogans serogroup Icterohaemorrhagiae serovar copenhageni (strain Fiocruz L1-130).